Here is a 428-residue protein sequence, read N- to C-terminus: MMHAEIVSIGDELLKGQRVNTNAASIAAMLSLEGVPVRRITACSDREEEMQEVFSEALGRSELVLVTGGLGPTRDDRTRNAVLKLLNRGLTLDPGSLREVELRVFARGREMTELMRSQAMVVEGSLAIPNTKGTAAGMILNCGPRFSERHLVLMPGVPVEMQAMMEGTVLPWVRERSGTTIIHTPVKTIGVGEATLAEMIVSVEDALPEGTTVAYLPHGAGVDVMVSTIAEARERAEEDNAAVAGAISRLAAEFVYAVGNRSLEETILDMLRGQQETLAIAESCTGGLVASRITDVAGSSGVFTGGFVVYSNIAKEVQLGVSPGLLDAFGAVSQEVARAMALGCLRRSGATIAIATTGIAGPGGATPDKPVGMLALGLARRTAGSQGPHVESSVLYMHGDRHQNKLRFSQAALRMLWEALRRSGSSSE.

This sequence belongs to the CinA family.

The protein is CinA-like protein of Chlorobium phaeovibrioides (strain DSM 265 / 1930) (Prosthecochloris vibrioformis (strain DSM 265)).